The chain runs to 108 residues: Ig kappa chain V-V region MOPC 173 (108 aa).

Residues 1-23 (DIQMTQTTSSLSASLGDRVTISC) are framework-1. C23 and C88 form a disulfide bridge. The interval 24-34 (SASQSIGNYLB) is complementarity-determining-1. The tract at residues 35 to 49 (WYQQKPDGTVKLLIY) is framework-2. Positions 50–56 (YTSSLHS) are complementarity-determining-2. A framework-3 region spans residues 57-88 (GVPSRFSGSGSGTDYSLTISBLZPZBIATYYC). The tract at residues 89–97 (QQYSKLPRT) is complementarity-determining-3. The segment at 98–108 (FGGGTKLEIKR) is framework-4.

In Mus musculus (Mouse), this protein is Ig kappa chain V-V region MOPC 173.